A 470-amino-acid polypeptide reads, in one-letter code: Arginine ADP-riboxanase OspC1 (470 aa).

The NAD(+) site is built by His-138, Gln-139, Ser-140, Leu-144, Ile-157, Asn-167, Phe-183, His-201, Phe-206, Asp-226, and Glu-320. Residue Glu-320 is part of the active site. ANK repeat units follow at residues 363–392 (IALQ…ITRQ), 399–431 (HELY…DVNT), and 438–467 (SGDC…TSDN).

This sequence belongs to the OspC family. As to quaternary structure, interacts with host calmodulin (CALM1, CALM2 and/or CALM3); specifically interacts with the apo form of calmodulin, preventing calcium-binding.

It is found in the secreted. The protein localises to the host nucleus. It carries out the reaction L-arginyl-[protein] + NAD(+) = ADP-riboxanated L-argininyl-[protein] + nicotinamide + NH4(+) + H(+). Its function is as follows. ADP-riboxanase effector that mediates arginine ADP-riboxanation of host caspases. ADP-riboxanation of host apoptotic caspases (CASP3, CASP8 and CASP9) prevents their activation, thereby inhibiting host cell extrinsic and intrinsic apoptosis. Does not catalyze ADP-riboxanation of host CASP4/CASP11. Independently of its ADP-riboxanase activity, acts as an inhibitor of calcium signaling by inhibiting host calmodulin, preventing activation of the JAK-STAT signaling pathway in response to interferon-beta. Mechanistically, acts by binding to the apo form of calmodulin, preventing calcium-binding and ability to activate host CaMK2 (CAMKII), which is required to stimulate the JAK-STAT signaling pathway in response to interferon-beta. In Shigella flexneri, this protein is Arginine ADP-riboxanase OspC1.